Here is a 66-residue protein sequence, read N- to C-terminus: Large ribosomal subunit protein bL35 (66 aa).

The segment covering 1–15 has biased composition (basic residues); sequence MSKMKTKSGAKKRFK. Positions 1 to 35 are disordered; that stretch reads MSKMKTKSGAKKRFKLTASGKVKAGQAGKRHGMIK.

This sequence belongs to the bacterial ribosomal protein bL35 family.

The protein is Large ribosomal subunit protein bL35 of Maricaulis maris (strain MCS10) (Caulobacter maris).